A 1526-amino-acid chain; its full sequence is Ig-like and fibronectin type-III domain-containing protein 2 (1526 aa).

A signal peptide spans 1–19 (MMRWRLAVLFLTLLASTTG). The segment at 20–39 (DDTTTKASVSTTTKKGTDGP) is disordered. The Extracellular portion of the chain corresponds to 20–1415 (DDTTTKASVS…RRSASKGSSS (1396 aa)). Residues 24 to 33 (TKASVSTTTK) show a composition bias toward low complexity. In terms of domain architecture, Ig-like C2-type 1 spans 39-170 (PHLTTDDEGF…ELLEFQVEVL (132 aa)). The cysteines at positions 61 and 154 are disulfide-linked. N-linked (GlcNAc...) asparagine glycans are attached at residues asparagine 87, asparagine 143, asparagine 158, asparagine 181, asparagine 414, asparagine 427, asparagine 475, asparagine 489, asparagine 533, asparagine 590, asparagine 617, and asparagine 662. Residues 379 to 470 (APRGKRDVDF…VRNIASTNVH (92 aa)) form the Fibronectin type-III 1 domain. The Fibronectin type-III 2 domain occupies 587 to 678 (APGNVTISEL…TAKLFSTLPT (92 aa)). Positions 682 to 724 (PLCTIGEPIYMNDGRVMICDAVNPCPNGFRCTGAGSDLSYCCP) constitute a WR1 domain. 7 N-linked (GlcNAc...) asparagine glycosylation sites follow: asparagine 754, asparagine 871, asparagine 906, asparagine 939, asparagine 979, asparagine 1004, and asparagine 1049. Fibronectin type-III domains lie at 827–914 (AVRN…TKPA) and 924–1020 (APEK…AQKD). One can recognise an Ig-like C2-type 2 domain in the interval 1116-1207 (ASVTMKKDKI…SRVEASSEVI (92 aa)). A disulfide bond links cysteine 1137 and cysteine 1190. An N-linked (GlcNAc...) asparagine glycan is attached at asparagine 1250. In terms of domain architecture, Fibronectin type-III 5 spans 1314–1406 (APSEVSNVRI…SAIPKDSEPR (93 aa)). A helical transmembrane segment spans residues 1416–1436 (AFWIVVILVVFGVLIAGLAVL). Residues 1437-1526 (SKRRELPYPI…NGMRYAKLET (90 aa)) are Cytoplasmic-facing. The segment at 1485-1518 (SATTGTAAATQSEWQSANLEANSTTDNSHEYRNG) is disordered. A compositionally biased stretch (polar residues) spans 1495–1510 (QSEWQSANLEANSTTD).

Its subcellular location is the cell membrane. In Caenorhabditis elegans, this protein is Ig-like and fibronectin type-III domain-containing protein 2.